The sequence spans 320 residues: Annexin A5 (320 aa).

Alanine 2 carries the N-acetylalanine modification. Annexin repeat units lie at residues 15–86, 87–158, 170–242, and 246–317; these read FDER…ALMK, PSRL…VLLQ, AQVE…AVVK, and SIPA…LLCG. Lysine 29 participates in a covalent cross-link: Glycyl lysine isopeptide (Lys-Gly) (interchain with G-Cter in SUMO1); alternate. Lysine 29 is covalently cross-linked (Glycyl lysine isopeptide (Lys-Gly) (interchain with G-Cter in SUMO2); alternate). The residue at position 37 (serine 37) is a Phosphoserine. N6-acetyllysine occurs at positions 70, 76, 79, 97, and 101. Lysine 290 carries the N6-succinyllysine modification. Residues 314 to 320 carry the [IL]-x-C-x-x-[DE] motif motif; the sequence is LLCGGED.

Belongs to the annexin family. In terms of assembly, monomer. Binds ATRX and EIF5B. S-nitrosylation is induced by interferon-gamma and oxidatively-modified low-densitity lipoprotein (LDL(ox)) possibly implicating the iNOS-S100A8/9 transnitrosylase complex.

Functionally, this protein is an anticoagulant protein that acts as an indirect inhibitor of the thromboplastin-specific complex, which is involved in the blood coagulation cascade. In Macaca fascicularis (Crab-eating macaque), this protein is Annexin A5 (ANXA5).